Reading from the N-terminus, the 577-residue chain is Galectin-3-binding protein (577 aa).

The N-terminal stretch at 1–18 (MALLWLLSVFLLVPGTQG) is a signal peptide. The 101-residue stretch at 24–124 (MRLVNGASAN…HEKDAGVVCS (101 aa)) folds into the SRCR domain. Disulfide bonds link Cys49–Cys113, Cys62–Cys123, and Cys93–Cys103. Asn69 carries an N-linked (GlcNAc...) asparagine glycan. Asn125 carries N-linked (GlcNAc...) asparagine glycosylation. The BTB domain maps to 153–221 (CDLFIQVTGQ…FYSRRIEVSM (69 aa)). The BACK domain maps to 260–360 (PLDLYAYARA…MLPQELFELQ (101 aa)). N-linked (GlcNAc...) asparagine glycans are attached at residues Asn362, Asn398, Asn543, and Asn572.

In terms of assembly, homodimers and homomultimers. The multimers form ring-like structures with a diameter of 30-40 nm. Binds LGALS1 and LGALS3. Binds ITGB1, COL4A1, COL5A1, COL6A1, FN1 and NID. Interacts with PPIC (in vitro). The unglycosylated form interacts with PDE4DIP isoform 2/MMG8/SMYLE; this interaction may connect a pericentrosomal complex to the gamma-tubulin ring complex (gamma-TuRC) to promote microtubule assembly and acetylation. N-glycosylated. In terms of tissue distribution, detected in embryo, liver, spleen, kidney, lung, heart, intestine, thymus and lymph node.

The protein resides in the secreted. Its subcellular location is the extracellular space. It is found in the extracellular matrix. Functionally, promotes integrin-mediated cell adhesion. May stimulate host defense against viruses and tumor cells. In Mus musculus (Mouse), this protein is Galectin-3-binding protein (Lgals3bp).